Here is a 211-residue protein sequence, read N- to C-terminus: C-type lectin domain family 2 member L (211 aa).

Positions 1–53 (MEPAREPPARARPPPPAARPAPAAPRPRSPAEAEARGPEGLLRRSGSGYEGST) are disordered. Pro residues predominate over residues 10 to 28 (RARPPPPAARPAPAAPRPR). Phosphoserine is present on Ser29. The helical transmembrane segment at 66–86 (LLLGAIAVLLFAILVVMSILA) threads the bilayer. One can recognise a C-type lectin domain in the interval 104–206 (YGRKCYYFSE…CLTTRPWVCS (103 aa)). Intrachain disulfides connect Cys125–Cys205 and Cys184–Cys197.

It is found in the membrane. This Mus musculus (Mouse) protein is C-type lectin domain family 2 member L (Clec2l).